The chain runs to 425 residues: UPF0761 membrane protein PXO_04555 (425 aa).

Transmembrane regions (helical) follow at residues 48-68, 105-125, 154-174, 182-202, 219-239, and 250-270; these read VFALVPLAIVVFGVLSAFPAF, FTVAGMVALVASLLITLHSIE, GTMLAAASMAMAAYVFALPLF, LAEFAWRLAPMAVEFICIVLI, GALLAVILMEIVKWGFGVYLG, and ALSALPILLLWIYLSWVSVLL.

This sequence belongs to the UPF0761 family.

The protein localises to the cell inner membrane. This Xanthomonas oryzae pv. oryzae (strain PXO99A) protein is UPF0761 membrane protein PXO_04555.